Reading from the N-terminus, the 199-residue chain is Peptidyl-tRNA hydrolase (199 aa).

Tyrosine 15 serves as a coordination point for tRNA. Histidine 20 functions as the Proton acceptor in the catalytic mechanism. Positions 66, 68, and 114 each coordinate tRNA.

Belongs to the PTH family. In terms of assembly, monomer.

The protein resides in the cytoplasm. It catalyses the reaction an N-acyl-L-alpha-aminoacyl-tRNA + H2O = an N-acyl-L-amino acid + a tRNA + H(+). In terms of biological role, hydrolyzes ribosome-free peptidyl-tRNAs (with 1 or more amino acids incorporated), which drop off the ribosome during protein synthesis, or as a result of ribosome stalling. Its function is as follows. Catalyzes the release of premature peptidyl moieties from peptidyl-tRNA molecules trapped in stalled 50S ribosomal subunits, and thus maintains levels of free tRNAs and 50S ribosomes. In Cupriavidus pinatubonensis (strain JMP 134 / LMG 1197) (Cupriavidus necator (strain JMP 134)), this protein is Peptidyl-tRNA hydrolase.